Consider the following 206-residue polypeptide: Thiamine-phosphate synthase (206 aa).

Residues 39 to 43 (QYREK) and N74 contribute to the 4-amino-2-methyl-5-(diphosphooxymethyl)pyrimidine site. D75 and D94 together coordinate Mg(2+). S112 lines the 4-amino-2-methyl-5-(diphosphooxymethyl)pyrimidine pocket. 138–140 (TNT) is a 2-[(2R,5Z)-2-carboxy-4-methylthiazol-5(2H)-ylidene]ethyl phosphate binding site. Residue K141 coordinates 4-amino-2-methyl-5-(diphosphooxymethyl)pyrimidine. Residues G170 and 190 to 191 (IS) contribute to the 2-[(2R,5Z)-2-carboxy-4-methylthiazol-5(2H)-ylidene]ethyl phosphate site.

It belongs to the thiamine-phosphate synthase family. Mg(2+) is required as a cofactor.

The catalysed reaction is 2-[(2R,5Z)-2-carboxy-4-methylthiazol-5(2H)-ylidene]ethyl phosphate + 4-amino-2-methyl-5-(diphosphooxymethyl)pyrimidine + 2 H(+) = thiamine phosphate + CO2 + diphosphate. It carries out the reaction 2-(2-carboxy-4-methylthiazol-5-yl)ethyl phosphate + 4-amino-2-methyl-5-(diphosphooxymethyl)pyrimidine + 2 H(+) = thiamine phosphate + CO2 + diphosphate. It catalyses the reaction 4-methyl-5-(2-phosphooxyethyl)-thiazole + 4-amino-2-methyl-5-(diphosphooxymethyl)pyrimidine + H(+) = thiamine phosphate + diphosphate. The protein operates within cofactor biosynthesis; thiamine diphosphate biosynthesis; thiamine phosphate from 4-amino-2-methyl-5-diphosphomethylpyrimidine and 4-methyl-5-(2-phosphoethyl)-thiazole: step 1/1. Its function is as follows. Condenses 4-methyl-5-(beta-hydroxyethyl)thiazole monophosphate (THZ-P) and 2-methyl-4-amino-5-hydroxymethyl pyrimidine pyrophosphate (HMP-PP) to form thiamine monophosphate (TMP). This is Thiamine-phosphate synthase from Oceanobacillus iheyensis (strain DSM 14371 / CIP 107618 / JCM 11309 / KCTC 3954 / HTE831).